A 148-amino-acid chain; its full sequence is Lysozyme C (148 aa).

Positions 1-18 (MKVLIILGLVLLSVMVQG) are cleaved as a signal peptide. A C-type lysozyme domain is found at 19–148 (KVFERCELAR…VSQYVQGCGV (130 aa)). 4 cysteine pairs are disulfide-bonded: Cys-24-Cys-146, Cys-48-Cys-134, Cys-83-Cys-99, and Cys-95-Cys-113. Active-site residues include Glu-53 and Asp-71.

The protein belongs to the glycosyl hydrolase 22 family. Monomer.

It carries out the reaction Hydrolysis of (1-&gt;4)-beta-linkages between N-acetylmuramic acid and N-acetyl-D-glucosamine residues in a peptidoglycan and between N-acetyl-D-glucosamine residues in chitodextrins.. Its function is as follows. Lysozymes have primarily a bacteriolytic function; those in tissues and body fluids are associated with the monocyte-macrophage system and enhance the activity of immunoagents. In Callithrix jacchus (White-tufted-ear marmoset), this protein is Lysozyme C (LYZ).